The primary structure comprises 360 residues: MTAKTPLHTTHLACGAKMVDFHGWDMPLHYGSQLNEHHAVRNDAGMFDVSHMTIVDILGAGGRQFLRKLLTNDVDQITHNGKALYSCMCNEHGGIIDDLIVYQRASDNYRVVLNSATRQNDVAWIRAKSEGFAVGLQERRELSMLAVQGPNAIAKTLSILAPAHVDAVSTLTPFECVDVDHWFFARTGYTGEDGLEIIVPNEFVTQLWNDLLNAGVTPCGLGARDTLRLEAGMLLYGQDMDETTTPLESGLTWTVKWEPEDRGFIGMGALVSQKQQGIKRKMVGLTLLDKGIMRHGQKVIIEGCPDGIITSGSYSPTLQQSIALARVPVETGEQVLVDIRGKLIPAKVGKPRFIKQGKPV.

This sequence belongs to the GcvT family. The glycine cleavage system is composed of four proteins: P, T, L and H.

It carries out the reaction N(6)-[(R)-S(8)-aminomethyldihydrolipoyl]-L-lysyl-[protein] + (6S)-5,6,7,8-tetrahydrofolate = N(6)-[(R)-dihydrolipoyl]-L-lysyl-[protein] + (6R)-5,10-methylene-5,6,7,8-tetrahydrofolate + NH4(+). In terms of biological role, the glycine cleavage system catalyzes the degradation of glycine. This is Aminomethyltransferase from Legionella pneumophila (strain Lens).